A 152-amino-acid polypeptide reads, in one-letter code: Large ribosomal subunit protein uL15 (152 aa).

Positions Met1–Gly54 are disordered. The span at Gly24–Val37 shows a compositional bias: gly residues.

The protein belongs to the universal ribosomal protein uL15 family. In terms of assembly, part of the 50S ribosomal subunit.

Binds to the 23S rRNA. This is Large ribosomal subunit protein uL15 from Psychrobacter sp. (strain PRwf-1).